We begin with the raw amino-acid sequence, 91 residues long: Acylphosphatase (91 aa).

The Acylphosphatase-like domain occupies 5–91 (CSKFIVSGHV…EHDYQGFEIL (87 aa)). Active-site residues include arginine 20 and asparagine 38.

This sequence belongs to the acylphosphatase family.

The enzyme catalyses an acyl phosphate + H2O = a carboxylate + phosphate + H(+). The protein is Acylphosphatase (acyP) of Vibrio cholerae serotype O1 (strain ATCC 39315 / El Tor Inaba N16961).